The primary structure comprises 318 residues: Thymidylate synthase (318 aa).

Residues arginine 25 and arginine 180–arginine 181 contribute to the dUMP site. Cysteine 200 acts as the Nucleophile in catalysis. DUMP is bound by residues arginine 220–aspartate 223, asparagine 231, and histidine 261–tyrosine 263. Residue aspartate 223 participates in (6R)-5,10-methylene-5,6,7,8-tetrahydrofolate binding. (6R)-5,10-methylene-5,6,7,8-tetrahydrofolate is bound at residue alanine 317.

The protein belongs to the thymidylate synthase family. Bacterial-type ThyA subfamily. In terms of assembly, homodimer.

The protein resides in the cytoplasm. The enzyme catalyses dUMP + (6R)-5,10-methylene-5,6,7,8-tetrahydrofolate = 7,8-dihydrofolate + dTMP. Its pathway is pyrimidine metabolism; dTTP biosynthesis. Its function is as follows. Catalyzes the reductive methylation of 2'-deoxyuridine-5'-monophosphate (dUMP) to 2'-deoxythymidine-5'-monophosphate (dTMP) while utilizing 5,10-methylenetetrahydrofolate (mTHF) as the methyl donor and reductant in the reaction, yielding dihydrofolate (DHF) as a by-product. This enzymatic reaction provides an intracellular de novo source of dTMP, an essential precursor for DNA biosynthesis. The protein is Thymidylate synthase of Bacillus cereus (strain ATCC 14579 / DSM 31 / CCUG 7414 / JCM 2152 / NBRC 15305 / NCIMB 9373 / NCTC 2599 / NRRL B-3711).